The chain runs to 179 residues: ATP synthase subunit b (179 aa).

The helical transmembrane segment at 27–47 threads the bilayer; the sequence is TAITFLVMLAVLAKFAWGPIV.

It belongs to the ATPase B chain family. In terms of assembly, F-type ATPases have 2 components, F(1) - the catalytic core - and F(0) - the membrane proton channel. F(1) has five subunits: alpha(3), beta(3), gamma(1), delta(1), epsilon(1). F(0) has three main subunits: a(1), b(2) and c(10-14). The alpha and beta chains form an alternating ring which encloses part of the gamma chain. F(1) is attached to F(0) by a central stalk formed by the gamma and epsilon chains, while a peripheral stalk is formed by the delta and b chains.

Its subcellular location is the cell inner membrane. F(1)F(0) ATP synthase produces ATP from ADP in the presence of a proton or sodium gradient. F-type ATPases consist of two structural domains, F(1) containing the extramembraneous catalytic core and F(0) containing the membrane proton channel, linked together by a central stalk and a peripheral stalk. During catalysis, ATP synthesis in the catalytic domain of F(1) is coupled via a rotary mechanism of the central stalk subunits to proton translocation. Functionally, component of the F(0) channel, it forms part of the peripheral stalk, linking F(1) to F(0). This Anaeromyxobacter dehalogenans (strain 2CP-C) protein is ATP synthase subunit b.